The sequence spans 617 residues: UvrABC system protein C (617 aa).

Residues 11–85 (TTPGVYIFRK…IKQHRPHYNV (75 aa)) enclose the GIY-YIG domain. Positions 194-229 (APVIARLKEDMKVAAQGQDFEQAARLRDRVQAVEKL) constitute a UVR domain.

Belongs to the UvrC family. As to quaternary structure, interacts with UvrB in an incision complex.

The protein localises to the cytoplasm. The UvrABC repair system catalyzes the recognition and processing of DNA lesions. UvrC both incises the 5' and 3' sides of the lesion. The N-terminal half is responsible for the 3' incision and the C-terminal half is responsible for the 5' incision. This Deinococcus radiodurans (strain ATCC 13939 / DSM 20539 / JCM 16871 / CCUG 27074 / LMG 4051 / NBRC 15346 / NCIMB 9279 / VKM B-1422 / R1) protein is UvrABC system protein C.